Reading from the N-terminus, the 174-residue chain is ATP-dependent protease subunit HslV (174 aa).

Threonine 2 is an active-site residue. Residues glycine 157, cysteine 160, and threonine 163 each contribute to the Na(+) site.

It belongs to the peptidase T1B family. HslV subfamily. As to quaternary structure, a double ring-shaped homohexamer of HslV is capped on each side by a ring-shaped HslU homohexamer. The assembly of the HslU/HslV complex is dependent on binding of ATP.

Its subcellular location is the cytoplasm. The enzyme catalyses ATP-dependent cleavage of peptide bonds with broad specificity.. Its activity is regulated as follows. Allosterically activated by HslU binding. Functionally, protease subunit of a proteasome-like degradation complex believed to be a general protein degrading machinery. The sequence is that of ATP-dependent protease subunit HslV from Shewanella oneidensis (strain ATCC 700550 / JCM 31522 / CIP 106686 / LMG 19005 / NCIMB 14063 / MR-1).